We begin with the raw amino-acid sequence, 96 residues long: MKLRPLHDRVIVKRVENETKTASGIVIPDSAAEKPDQGEVLAVGPGKKNDKGDLSPMAVKIGDRVLFGKYSGQTVKVDGDELLVMKEEDLFAVVEK.

This sequence belongs to the GroES chaperonin family. In terms of assembly, heptamer of 7 subunits arranged in a ring. Interacts with the chaperonin GroEL.

Its subcellular location is the cytoplasm. In terms of biological role, together with the chaperonin GroEL, plays an essential role in assisting protein folding. The GroEL-GroES system forms a nano-cage that allows encapsulation of the non-native substrate proteins and provides a physical environment optimized to promote and accelerate protein folding. GroES binds to the apical surface of the GroEL ring, thereby capping the opening of the GroEL channel. This Polaromonas sp. (strain JS666 / ATCC BAA-500) protein is Co-chaperonin GroES.